Reading from the N-terminus, the 212-residue chain is 3-isopropylmalate dehydratase small subunit (212 aa).

The protein belongs to the LeuD family. LeuD type 1 subfamily. As to quaternary structure, heterodimer of LeuC and LeuD.

It carries out the reaction (2R,3S)-3-isopropylmalate = (2S)-2-isopropylmalate. It functions in the pathway amino-acid biosynthesis; L-leucine biosynthesis; L-leucine from 3-methyl-2-oxobutanoate: step 2/4. Its function is as follows. Catalyzes the isomerization between 2-isopropylmalate and 3-isopropylmalate, via the formation of 2-isopropylmaleate. The chain is 3-isopropylmalate dehydratase small subunit from Thioalkalivibrio sulfidiphilus (strain HL-EbGR7).